The sequence spans 71 residues: Dermaseptin-PT9 (71 aa).

The first 22 residues, 1–22, serve as a signal peptide directing secretion; the sequence is MAFLKKSLFLVLFLGLVSLSIC. Residues 23-43 constitute a propeptide that is removed on maturation; it reads EEEKRENEMEQEDDEQSEMKR. Valine amide is present on V68. The propeptide occupies 69-71; the sequence is GEQ.

Belongs to the frog skin active peptide (FSAP) family. Dermaseptin subfamily. As to expression, expressed by the skin glands.

Its subcellular location is the secreted. The protein localises to the target cell membrane. Its function is as follows. Antimicrobial peptide with activity against fungi, Gram-positive and Gram-negative bacteria. Is active against S.aureus (MIC=16 uM), MRSA (MIC=32 uM), E.faecalis (MIC=16 uM), E.coli (MIC=8 uM), P.aeruginosa (MIC=16 uM), K.pneumoniae (MIC=8 uM), and C.albicans (MIC=64 uM). Also inhibits biofilm formation. Acts by disrupting cell membranes. Also exhibits anti-proliferative effect against various human cancer cells. Shows weak hemolytic activity towards horse erythrocytes. The protein is Dermaseptin-PT9 of Phyllomedusa tarsius (Brownbelly leaf frog).